The chain runs to 324 residues: uncharacterized protein (324 aa).

Helical transmembrane passes span 5-24 (VIGILASLFFAVTFILNRAM), 39-61 (FIFMVPFLCLIVIMRGTFTPLLL), 68-90 (FYWIKWSFVGFVLFYAPITFAAA), 95-117 (WLIAGTWQITIVAGVLLSPLFYV), 130-152 (QKIPLVSLGTSVIILIGAALIQL), 162-179 (MLLFSVLPVVIAAFAYPL), 199-218 (LGMTLASLPFWLILAAYGWW), and 228-250 (TVQSFIVAVSSGIIATVLFFWAT).

The protein localises to the cell membrane. This is an uncharacterized protein from Bacillus subtilis (strain 168).